Consider the following 482-residue polypeptide: Adenylosuccinate lyase (482 aa).

Substrate is bound by residues 14-15 (RY), 82-84 (RHD), and 108-109 (TS). His156 serves as the catalytic Proton donor/acceptor. Lys196 participates in a covalent cross-link: Glycyl lysine isopeptide (Lys-Gly) (interchain with G-Cter in ubiquitin). Gln238 provides a ligand contact to substrate. Ser286 functions as the Proton donor/acceptor in the catalytic mechanism. Arg300, Arg326, Ser331, and Arg335 together coordinate substrate.

This sequence belongs to the lyase 1 family. Adenylosuccinate lyase subfamily. Homotetramer. Residues from neighboring subunits contribute catalytic and substrate-binding residues to each active site.

It catalyses the reaction N(6)-(1,2-dicarboxyethyl)-AMP = fumarate + AMP. The enzyme catalyses (2S)-2-[5-amino-1-(5-phospho-beta-D-ribosyl)imidazole-4-carboxamido]succinate = 5-amino-1-(5-phospho-beta-D-ribosyl)imidazole-4-carboxamide + fumarate. Its pathway is purine metabolism; AMP biosynthesis via de novo pathway; AMP from IMP: step 2/2. It participates in purine metabolism; IMP biosynthesis via de novo pathway; 5-amino-1-(5-phospho-D-ribosyl)imidazole-4-carboxamide from 5-amino-1-(5-phospho-D-ribosyl)imidazole-4-carboxylate: step 2/2. In Saccharomyces cerevisiae (strain ATCC 204508 / S288c) (Baker's yeast), this protein is Adenylosuccinate lyase (ADE13).